Here is a 254-residue protein sequence, read N- to C-terminus: L-rhamnose 1-dehydrogenase (NADP(+)) (254 aa).

NADP(+) contacts are provided by G13, S15, R16, I18, D64, and N91. Catalysis depends on S144, which acts as the Proton donor. S144, S146, Q154, and Y157 together coordinate beta-L-rhamnose. Residues Y157 and K161 each coordinate NADP(+). The Proton acceptor role is filled by Y157. Residue K161 is the Lowers pKa of active site Tyr of the active site. T189 serves as a coordination point for beta-L-rhamnose. I190 contacts NADP(+). N195 contacts beta-L-rhamnose.

This sequence belongs to the short-chain dehydrogenases/reductases (SDR) family.

It catalyses the reaction L-rhamnofuranose + NADP(+) = L-rhamnono-1,4-lactone + NADPH + H(+). It functions in the pathway carbohydrate degradation; L-rhamnose degradation. Involved in the non-phosphorylated metabolic pathway of L-rhamnose catabolism. Catalyzes the oxidation of L-rhamnose to yield L-rhamnono-1,4-lactone. It can also oxidize L-lyxose and L-mannose, and uses only NADP. This chain is L-rhamnose 1-dehydrogenase (NADP(+)), found in Thermoplasma acidophilum (strain ATCC 25905 / DSM 1728 / JCM 9062 / NBRC 15155 / AMRC-C165).